The chain runs to 128 residues: NADH-ubiquinone oxidoreductase chain 3 (128 aa).

Helical transmembrane passes span F4–L24, L50–I70, and Y86–I106.

It belongs to the complex I subunit 3 family. As to quaternary structure, complex I is composed of 37 different subunits.

The protein resides in the mitochondrion membrane. It carries out the reaction a ubiquinone + NADH + 5 H(+)(in) = a ubiquinol + NAD(+) + 4 H(+)(out). Core subunit of the mitochondrial membrane respiratory chain NADH dehydrogenase (Complex I) that is believed to belong to the minimal assembly required for catalysis. Complex I functions in the transfer of electrons from NADH to the respiratory chain. The immediate electron acceptor for the enzyme is believed to be ubiquinone. The chain is NADH-ubiquinone oxidoreductase chain 3 (ND3) from Yarrowia lipolytica (strain CLIB 122 / E 150) (Yeast).